The primary structure comprises 702 residues: Polyribonucleotide nucleotidyltransferase (702 aa).

Residues Asp-485 and Asp-491 each contribute to the Mg(2+) site. In terms of domain architecture, KH spans 552–611 (PKTSTLQIDPEKIRDVIGAGGKVINKIIADTGVKIDIKEDGLVYVSSAESEGVKEAVKII). In terms of domain architecture, S1 motif spans 621-689 (GEIYLGKVTK…SQGRINLSRK (69 aa)).

This sequence belongs to the polyribonucleotide nucleotidyltransferase family. Mg(2+) serves as cofactor.

It localises to the cytoplasm. It carries out the reaction RNA(n+1) + phosphate = RNA(n) + a ribonucleoside 5'-diphosphate. Functionally, involved in mRNA degradation. Catalyzes the phosphorolysis of single-stranded polyribonucleotides processively in the 3'- to 5'-direction. The protein is Polyribonucleotide nucleotidyltransferase of Clostridium perfringens (strain 13 / Type A).